A 177-amino-acid polypeptide reads, in one-letter code: Inorganic pyrophosphatase (177 aa).

Lysine 31, arginine 45, and tyrosine 57 together coordinate substrate. Positions 67, 72, and 104 each coordinate Mg(2+). Residue tyrosine 141 coordinates substrate.

This sequence belongs to the PPase family. In terms of assembly, homohexamer. It depends on Mg(2+) as a cofactor.

The protein resides in the cytoplasm. It catalyses the reaction diphosphate + H2O = 2 phosphate + H(+). Functionally, catalyzes the hydrolysis of inorganic pyrophosphate (PPi) forming two phosphate ions. This is Inorganic pyrophosphatase from Halobacterium salinarum (strain ATCC 700922 / JCM 11081 / NRC-1) (Halobacterium halobium).